The chain runs to 82 residues: Small ribosomal subunit protein bS16 (82 aa).

Belongs to the bacterial ribosomal protein bS16 family.

The protein is Small ribosomal subunit protein bS16 of Histophilus somni (strain 2336) (Haemophilus somnus).